A 386-amino-acid polypeptide reads, in one-letter code: Phosphoglycerate kinase (386 aa).

Substrate-binding positions include Asp-21–Asn-23, Arg-36, His-59–Arg-62, Arg-113, and Arg-146. ATP is bound by residues Lys-197, Glu-314, and Gly-340–Thr-343.

The protein belongs to the phosphoglycerate kinase family. Monomer.

It is found in the cytoplasm. The catalysed reaction is (2R)-3-phosphoglycerate + ATP = (2R)-3-phospho-glyceroyl phosphate + ADP. Its pathway is carbohydrate degradation; glycolysis; pyruvate from D-glyceraldehyde 3-phosphate: step 2/5. The polypeptide is Phosphoglycerate kinase (Azotobacter vinelandii (strain DJ / ATCC BAA-1303)).